We begin with the raw amino-acid sequence, 775 residues long: DNA polymerase (775 aa).

Belongs to the DNA polymerase type-B family. In terms of assembly, monomer.

The catalysed reaction is DNA(n) + a 2'-deoxyribonucleoside 5'-triphosphate = DNA(n+1) + diphosphate. With respect to regulation, an 11-mer corresponding to the PIP-box of RfcL inhibits DNA synthesis. In terms of biological role, in addition to polymerase activity, this DNA polymerase exhibits 3' to 5' exonuclease activity. The polypeptide is DNA polymerase (pol) (Pyrococcus furiosus (strain ATCC 43587 / DSM 3638 / JCM 8422 / Vc1)).